A 289-amino-acid polypeptide reads, in one-letter code: Acetyl-coenzyme A carboxylase carboxyl transferase subunit beta (289 aa).

The CoA carboxyltransferase N-terminal domain maps to Val-28–Ser-289. The Zn(2+) site is built by Cys-32, Cys-35, Cys-51, and Cys-54. A C4-type zinc finger spans residues Cys-32–Cys-54.

It belongs to the AccD/PCCB family. As to quaternary structure, acetyl-CoA carboxylase is a heterohexamer composed of biotin carboxyl carrier protein (AccB), biotin carboxylase (AccC) and two subunits each of ACCase subunit alpha (AccA) and ACCase subunit beta (AccD). Requires Zn(2+) as cofactor.

The protein localises to the cytoplasm. It carries out the reaction N(6)-carboxybiotinyl-L-lysyl-[protein] + acetyl-CoA = N(6)-biotinyl-L-lysyl-[protein] + malonyl-CoA. It participates in lipid metabolism; malonyl-CoA biosynthesis; malonyl-CoA from acetyl-CoA: step 1/1. Component of the acetyl coenzyme A carboxylase (ACC) complex. Biotin carboxylase (BC) catalyzes the carboxylation of biotin on its carrier protein (BCCP) and then the CO(2) group is transferred by the transcarboxylase to acetyl-CoA to form malonyl-CoA. This is Acetyl-coenzyme A carboxylase carboxyl transferase subunit beta from Bacillus thuringiensis subsp. konkukian (strain 97-27).